The primary structure comprises 931 residues: Chitin synthase 7 (931 aa).

Disordered regions lie at residues 1-34 (MVRH…GHYR) and 56-92 (GDVG…ASSS). Composition is skewed to polar residues over residues 7–28 (FTNS…TPYP) and 83–92 (PLTTGPASSS). Asn536 carries N-linked (GlcNAc...) asparagine glycosylation. Helical transmembrane passes span 573–593 (IFSL…FSII), 615–635 (INLV…VLAL), and 647–667 (ILTL…SIIL). Residue Asn691 is glycosylated (N-linked (GlcNAc...) asparagine). 2 helical membrane-spanning segments follow: residues 695–715 (GVLV…SFLY) and 725–745 (FPQY…YAFC). Residues 763-789 (LPAISSSKQKDGETAVVEEQQRSQGEL) are disordered. Asn819 carries N-linked (GlcNAc...) asparagine glycosylation. The helical transmembrane segment at 826–846 (LVVVWLLTNAALAISIQTLNG) threads the bilayer. N-linked (GlcNAc...) asparagine glycosylation is found at Asn866 and Asn874. Residues 899 to 919 (AILWTTFALSMVRFIGCVFYW) traverse the membrane as a helical segment.

The protein belongs to the chitin synthase family. Class III subfamily.

Its subcellular location is the cell membrane. The enzyme catalyses [(1-&gt;4)-N-acetyl-beta-D-glucosaminyl](n) + UDP-N-acetyl-alpha-D-glucosamine = [(1-&gt;4)-N-acetyl-beta-D-glucosaminyl](n+1) + UDP + H(+). In terms of biological role, polymerizes chitin, a structural polymer of the cell wall and septum, by transferring the sugar moiety of UDP-GlcNAc to the non-reducing end of the growing chitin polymer. This chain is Chitin synthase 7, found in Cryptococcus neoformans var. grubii serotype A (strain H99 / ATCC 208821 / CBS 10515 / FGSC 9487) (Filobasidiella neoformans var. grubii).